A 210-amino-acid chain; its full sequence is UPF0301 protein OCAR_7326/OCA5_c07920 (210 aa).

This sequence belongs to the UPF0301 (AlgH) family.

This chain is UPF0301 protein OCAR_7326/OCA5_c07920, found in Afipia carboxidovorans (strain ATCC 49405 / DSM 1227 / KCTC 32145 / OM5) (Oligotropha carboxidovorans).